The chain runs to 307 residues: Ninja-family protein 5 (307 aa).

Disordered stretches follow at residues methionine 1–valine 159 and threonine 173–proline 208. Gly residues predominate over residues glycine 8 to glycine 30. 2 stretches are compositionally biased toward polar residues: residues glutamine 63–cysteine 83 and threonine 173–glutamine 183.

Belongs to the Ninja family.

Its subcellular location is the nucleus. In Zea mays (Maize), this protein is Ninja-family protein 5.